Here is a 516-residue protein sequence, read N- to C-terminus: RNA-binding region-containing protein 3 (516 aa).

Disordered stretches follow at residues 1–27 (MAAP…RGDR), 106–130 (VHSP…DDKE), 210–254 (EDYM…DEDR), and 264–283 (ANLQ…RKKR). Position 21 is a phosphoserine (S21). The RRM 1 domain maps to 27-102 (RTLLVRHLPA…HTLVVEFAKE (76 aa)). S108 carries the post-translational modification Phosphoserine. Residues 115–130 (TEKKKRSDDPVEDDKE) are compositionally biased toward basic and acidic residues. Pro residues predominate over residues 217 to 230 (APLPPTSPQPPEEP). Positions 269–283 (KRPKPIKQRHVRKKR) are enriched in basic residues. The region spanning 419 to 502 (CRIYVKNLAK…KPMVVQFARS (84 aa)) is the RRM 2 domain.

Component of the U11/U12 snRNPs that are part of the U12-type spliceosome. Found in a complex with m(7)G-capped U12 snRNA. Interacts with PDCD7.

It localises to the nucleus. Participates in pre-mRNA U12-dependent splicing, performed by the minor spliceosome which removes U12-type introns. U12-type introns comprises less than 1% of all non-coding sequences. Binds to the 3'-stem-loop of m(7)G-capped U12 snRNA. This Bos taurus (Bovine) protein is RNA-binding region-containing protein 3 (RNPC3).